We begin with the raw amino-acid sequence, 274 residues long: Hydroxyethylthiazole kinase (274 aa).

Met-51 contributes to the substrate binding site. Positions 127 and 173 each coordinate ATP. Gly-200 is a substrate binding site.

This sequence belongs to the Thz kinase family. Requires Mg(2+) as cofactor.

The enzyme catalyses 5-(2-hydroxyethyl)-4-methylthiazole + ATP = 4-methyl-5-(2-phosphooxyethyl)-thiazole + ADP + H(+). It functions in the pathway cofactor biosynthesis; thiamine diphosphate biosynthesis; 4-methyl-5-(2-phosphoethyl)-thiazole from 5-(2-hydroxyethyl)-4-methylthiazole: step 1/1. In terms of biological role, catalyzes the phosphorylation of the hydroxyl group of 4-methyl-5-beta-hydroxyethylthiazole (THZ). This Photobacterium profundum (strain SS9) protein is Hydroxyethylthiazole kinase.